Consider the following 316-residue polypeptide: UDP-N-acetylenolpyruvoylglucosamine reductase (316 aa).

Residues 27–225 (VGGKAERFYR…KTAINALLKK (199 aa)) form the FAD-binding PCMH-type domain. R190 is a catalytic residue. S239 serves as the catalytic Proton donor. Residue E309 is part of the active site.

The protein belongs to the MurB family. It depends on FAD as a cofactor.

It is found in the cytoplasm. The enzyme catalyses UDP-N-acetyl-alpha-D-muramate + NADP(+) = UDP-N-acetyl-3-O-(1-carboxyvinyl)-alpha-D-glucosamine + NADPH + H(+). It functions in the pathway cell wall biogenesis; peptidoglycan biosynthesis. In terms of biological role, cell wall formation. The chain is UDP-N-acetylenolpyruvoylglucosamine reductase from Coxiella burnetii (strain CbuG_Q212) (Coxiella burnetii (strain Q212)).